A 592-amino-acid chain; its full sequence is Coronatine-insensitive protein 1 (592 aa).

In terms of domain architecture, F-box spans Thr-16–Met-57. 18 LRR repeats span residues Ala-58 to Gly-82, Lys-83 to Pro-102, Trp-103 to Arg-120, Arg-121 to Asp-154, Gly-155 to Lys-182, Trp-183 to Lys-210, Asp-211 to Val-236, Gly-237 to Met-264, Asn-265 to Asn-283, Glu-284 to Glu-308, Asp-309 to Arg-332, Gly-333 to Arg-368, Gly-369 to Glu-393, Ser-394 to Asn-426, Gly-427 to Ser-456, Tyr-457 to Glu-478, Gly-479 to Phe-500, and Ser-501 to Arg-524. Arg-85 contributes to the jasmonate binding site. 3 residues coordinate jasmonate: Arg-348, Tyr-386, and Arg-409. Arg-496 lines the jasmonate pocket.

In terms of assembly, component of SCF(COI1) E3 ubiquitin ligase complexes at least composed of ASK1 or ASK2, CUL1, RBX1A or RBX1B and COI1. Interacts with ASK1 and ASK2, but separately. Also binds to ASK11 and ASK12. Interacts with RBCS-1B and HDA6. SCF complexes interact with the COP9 signalosome (CSN). Interacts with TIFY10A.

Its pathway is protein modification; protein ubiquitination. Its function is as follows. Required for jasmonate-regulated plant fertility and defense processes, and for coronatine and/or other elicitors perceptions/responses. Seems to not be required for meiosis. Required for the regulation of some genes induced by wounding, but not for all. Component of SCF(COI1) E3 ubiquitin ligase complexes, which may mediate the ubiquitination and subsequent proteasomal degradation of target proteins (probably including the ribulose bisphosphate carboxylase small chain 1B RBCS-1B and the histone deacetylase HDA6). These SCF complexes play crucial roles in regulating response to jasmonate, and their interactions with the COP9 signalosome (CSN) appear to be important for their activity. Interacts with TIFY10A and inositol pentakisphosphate to form a high-affinity jasmonates coreceptor. Involved in the regulation of plant gene expression during plant-pathogen interactions with Pseudomonas syringae and Alternaria brassicicola. This is Coronatine-insensitive protein 1 (COI1) from Arabidopsis thaliana (Mouse-ear cress).